Reading from the N-terminus, the 104-residue chain is MERLAFKMKLNKGQKQAYKERHDQLWPELKQLLKDNGVSEYSIFIDEETNTLFAFQKVSGHGGSQDLANNEIVKKWWDFMADIMQVNPDNSPVSIPLEEVFYME.

Tyrosine 18 provides a ligand contact to substrate. Histidine 22 (proton donor) is an active-site residue. Residues tyrosine 41 and 76-77 (WW) contribute to the substrate site.

This sequence belongs to the rhamnose mutarotase family. Homodimer.

Its subcellular location is the cytoplasm. It catalyses the reaction alpha-L-rhamnose = beta-L-rhamnose. The protein operates within carbohydrate metabolism; L-rhamnose metabolism. Functionally, L-rhamnose mutarotase involved in ulvan degradation. Ulvan is the main polysaccharide component of the Ulvales (green seaweed) cell wall. It is composed of disaccharide building blocks comprising 3-sulfated rhamnose (Rha3S) linked to D-glucuronic acid (GlcA), L-iduronic acid (IduA), or D-xylose (Xyl). L-rhamnose mutarotase catalyzes the anomeric conversion of alpha- to beta-L-rhamnose. The sequence is that of L-rhamnose mutarotase (rhaM) from Formosa agariphila (strain DSM 15362 / KCTC 12365 / LMG 23005 / KMM 3901 / M-2Alg 35-1).